The sequence spans 103 residues: Cobalt transport protein CbiN (103 aa).

The next 2 membrane-spanning stretches (helical) occupy residues 6–26 and 68–88; these read VLTNVILLLLVVFITIIPFFV and LLFALQAAIGAGVIGFGLGYL.

It belongs to the CbiN family. Forms an energy-coupling factor (ECF) transporter complex composed of an ATP-binding protein (A component, CbiO), a transmembrane protein (T component, CbiQ) and 2 possible substrate-capture proteins (S components, CbiM and CbiN) of unknown stoichimetry.

It localises to the cell membrane. Its pathway is cofactor biosynthesis; adenosylcobalamin biosynthesis. Functionally, part of the energy-coupling factor (ECF) transporter complex CbiMNOQ involved in cobalt import. In Clostridium perfringens (strain 13 / Type A), this protein is Cobalt transport protein CbiN.